The primary structure comprises 1026 residues: Beta-galactosidase (1026 aa).

The Proton donor role is filled by glutamate 458. Glutamate 546 acts as the Nucleophile in catalysis.

This sequence belongs to the glycosyl hydrolase 2 family.

It catalyses the reaction Hydrolysis of terminal non-reducing beta-D-galactose residues in beta-D-galactosides.. The chain is Beta-galactosidase (lacZ) from Streptococcus thermophilus.